A 159-amino-acid polypeptide reads, in one-letter code: MRILGLDPGLATLGYGCIEVYRDTCQVRDFGVITTSADLPTGDRLQSLYNDLHTLIPILQPDLVALERLFFYRMSHTIGVAQARGVILLVLSQRHCPLLELTPPQVKQALTGYGNATKIEVQRAVQRELHLCTLPQPDDAADALAIALTASRHCGHING.

Active-site residues include aspartate 7, glutamate 67, and aspartate 139. Mg(2+)-binding residues include aspartate 7, glutamate 67, and aspartate 139.

The protein belongs to the RuvC family. In terms of assembly, homodimer which binds Holliday junction (HJ) DNA. The HJ becomes 2-fold symmetrical on binding to RuvC with unstacked arms; it has a different conformation from HJ DNA in complex with RuvA. In the full resolvosome a probable DNA-RuvA(4)-RuvB(12)-RuvC(2) complex forms which resolves the HJ. Mg(2+) is required as a cofactor.

It localises to the cytoplasm. The enzyme catalyses Endonucleolytic cleavage at a junction such as a reciprocal single-stranded crossover between two homologous DNA duplexes (Holliday junction).. Its function is as follows. The RuvA-RuvB-RuvC complex processes Holliday junction (HJ) DNA during genetic recombination and DNA repair. Endonuclease that resolves HJ intermediates. Cleaves cruciform DNA by making single-stranded nicks across the HJ at symmetrical positions within the homologous arms, yielding a 5'-phosphate and a 3'-hydroxyl group; requires a central core of homology in the junction. The consensus cleavage sequence is 5'-(A/T)TT(C/G)-3'. Cleavage occurs on the 3'-side of the TT dinucleotide at the point of strand exchange. HJ branch migration catalyzed by RuvA-RuvB allows RuvC to scan DNA until it finds its consensus sequence, where it cleaves and resolves the cruciform DNA. The chain is Crossover junction endodeoxyribonuclease RuvC from Thermosynechococcus vestitus (strain NIES-2133 / IAM M-273 / BP-1).